The primary structure comprises 229 residues: Large ribosomal subunit protein uL1 (229 aa).

The protein belongs to the universal ribosomal protein uL1 family. In terms of assembly, part of the 50S ribosomal subunit.

Its function is as follows. Binds directly to 23S rRNA. The L1 stalk is quite mobile in the ribosome, and is involved in E site tRNA release. Protein L1 is also a translational repressor protein, it controls the translation of the L11 operon by binding to its mRNA. The chain is Large ribosomal subunit protein uL1 from Mannheimia succiniciproducens (strain KCTC 0769BP / MBEL55E).